Here is a 190-residue protein sequence, read N- to C-terminus: Small ribosomal subunit protein eS7A (190 aa).

Ser2 is modified (N-acetylserine). Glycyl lysine isopeptide (Lys-Gly) (interchain with G-Cter in ubiquitin) cross-links involve residues Lys83, Lys84, and Lys124.

This sequence belongs to the eukaryotic ribosomal protein eS7 family. Component of the small ribosomal subunit (SSU). Mature yeast ribosomes consist of a small (40S) and a large (60S) subunit. The 40S small subunit contains 1 molecule of ribosomal RNA (18S rRNA) and 33 different proteins (encoded by 57 genes). The large 60S subunit contains 3 rRNA molecules (25S, 5.8S and 5S rRNA) and 46 different proteins (encoded by 81 genes). Interacts with snoRNA U3. uS11 interacts with MPP10. Component of the ribosomal small subunit (SSU) processome composed of at least 40 protein subunits and snoRNA U3. Post-translationally, N-terminally acetylated by acetyltransferase NatA. In terms of processing, ubiquitinated at Lys-83 and Lys-84 in response to stalled ribosomes, leading to activation of the No-Go Decay (NGD) pathway: first monoubiquitinated by MOT2/NOT4, followed by formation by HEL2 of 'Lys-63'-linked polyubiquitin chains on monoubiquitin.

The protein resides in the cytoplasm. It localises to the nucleus. The protein localises to the nucleolus. Functionally, component of the ribosome, a large ribonucleoprotein complex responsible for the synthesis of proteins in the cell. The small ribosomal subunit (SSU) binds messenger RNAs (mRNAs) and translates the encoded message by selecting cognate aminoacyl-transfer RNA (tRNA) molecules. The large subunit (LSU) contains the ribosomal catalytic site termed the peptidyl transferase center (PTC), which catalyzes the formation of peptide bonds, thereby polymerizing the amino acids delivered by tRNAs into a polypeptide chain. The nascent polypeptides leave the ribosome through a tunnel in the LSU and interact with protein factors that function in enzymatic processing, targeting, and the membrane insertion of nascent chains at the exit of the ribosomal tunnel. eS7 is involved in nucleolar processing of pre-18S ribosomal RNA and ribosome assembly. The sequence is that of Small ribosomal subunit protein eS7A from Saccharomyces cerevisiae (strain ATCC 204508 / S288c) (Baker's yeast).